The primary structure comprises 21 residues: Nigrocin-2 (21 aa).

An intrachain disulfide couples Cys-15 to Cys-21.

In terms of tissue distribution, expressed by the skin dorsal glands.

The protein resides in the secreted. In terms of biological role, thanks to its single linear amphipathic alpha-helix, may integrate into membrane phospholipids, leading to lysis of the membrane. Shows antibacterial activity against both Gram-positive and Gram-negative bacteria and against the fungus C.albicans. Has no hemolytic activity. This is Nigrocin-2 from Pelophylax nigromaculatus (Black-spotted frog).